Here is a 187-residue protein sequence, read N- to C-terminus: Ribulose bisphosphate carboxylase small subunit, chloroplastic (187 aa).

Residues 1–56 (MASSVMSTATVATGANAAQASMIASFNGLKSAASFPVTRKQDLDITSIASNGGRVE) constitute a chloroplast transit peptide.

It belongs to the RuBisCO small chain family. Heterohexadecamer of 8 large and 8 small subunits.

The protein localises to the plastid. Its subcellular location is the chloroplast. In terms of biological role, ruBisCO catalyzes two reactions: the carboxylation of D-ribulose 1,5-bisphosphate, the primary event in carbon dioxide fixation, as well as the oxidative fragmentation of the pentose substrate. Both reactions occur simultaneously and in competition at the same active site. Although the small subunit is not catalytic it is essential for maximal activity. The chain is Ribulose bisphosphate carboxylase small subunit, chloroplastic from Capsicum annuum (Capsicum pepper).